The sequence spans 812 residues: Hyaluronate lyase HylB (812 aa).

A signal peptide (tat-type signal) is located at residues 1-32 (MFGTPSRRTFLTASALSAMALAASPTVTDAIA). Residues asparagine 222, histidine 272, and tyrosine 281 contribute to the active site.

The protein belongs to the polysaccharide lyase 8 family. In terms of processing, predicted to be exported by the Tat system. The position of the signal peptide cleavage has been experimentally proven.

The protein localises to the secreted. The catalysed reaction is [hyaluronan](n) = n 3-(4-deoxy-beta-D-gluc-4-enuronosyl)-N-acetyl-D-glucosamine + H2O. Its function is as follows. Degrades hyaluronic acid (HA) exclusively into HA disaccharides (HA-2). Produced HA-2s confer anti-inflammatory properties leading to reduced immunopathology in the mouse model of acne. The protein is Hyaluronate lyase HylB of Cutibacterium acnes (Propionibacterium acnes).